We begin with the raw amino-acid sequence, 239 residues long: Ribonuclease PH (239 aa).

Phosphate contacts are provided by residues R86 and 124–126; that span reads GTR.

The protein belongs to the RNase PH family. Homohexameric ring arranged as a trimer of dimers.

It catalyses the reaction tRNA(n+1) + phosphate = tRNA(n) + a ribonucleoside 5'-diphosphate. Its function is as follows. Phosphorolytic 3'-5' exoribonuclease that plays an important role in tRNA 3'-end maturation. Removes nucleotide residues following the 3'-CCA terminus of tRNAs; can also add nucleotides to the ends of RNA molecules by using nucleoside diphosphates as substrates, but this may not be physiologically important. Probably plays a role in initiation of 16S rRNA degradation (leading to ribosome degradation) during starvation. This is Ribonuclease PH from Rhizobium etli (strain CIAT 652).